A 284-amino-acid polypeptide reads, in one-letter code: 4-diphosphocytidyl-2-C-methyl-D-erythritol kinase (284 aa).

Lysine 14 is an active-site residue. Residue 98–108 (PMGGGLGGGSS) participates in ATP binding. The active site involves aspartate 140.

This sequence belongs to the GHMP kinase family. IspE subfamily.

The enzyme catalyses 4-CDP-2-C-methyl-D-erythritol + ATP = 4-CDP-2-C-methyl-D-erythritol 2-phosphate + ADP + H(+). The protein operates within isoprenoid biosynthesis; isopentenyl diphosphate biosynthesis via DXP pathway; isopentenyl diphosphate from 1-deoxy-D-xylulose 5-phosphate: step 3/6. In terms of biological role, catalyzes the phosphorylation of the position 2 hydroxy group of 4-diphosphocytidyl-2C-methyl-D-erythritol. The protein is 4-diphosphocytidyl-2-C-methyl-D-erythritol kinase of Shewanella pealeana (strain ATCC 700345 / ANG-SQ1).